A 397-amino-acid polypeptide reads, in one-letter code: Iron-sulfur cluster assembly SufBD family protein Mb1497 (397 aa).

The protein belongs to the iron-sulfur cluster assembly SufBD family.

The chain is Iron-sulfur cluster assembly SufBD family protein Mb1497 from Mycobacterium bovis (strain ATCC BAA-935 / AF2122/97).